We begin with the raw amino-acid sequence, 160 residues long: Small ribosomal subunit protein uS7 (160 aa).

Belongs to the universal ribosomal protein uS7 family. As to quaternary structure, part of the 30S ribosomal subunit. Contacts proteins S9 and S11.

One of the primary rRNA binding proteins, it binds directly to 16S rRNA where it nucleates assembly of the head domain of the 30S subunit. Is located at the subunit interface close to the decoding center, probably blocks exit of the E-site tRNA. This Rickettsia typhi (strain ATCC VR-144 / Wilmington) protein is Small ribosomal subunit protein uS7.